Consider the following 98-residue polypeptide: Large ribosomal subunit protein uL23 (98 aa).

It belongs to the universal ribosomal protein uL23 family. Part of the 50S ribosomal subunit. Contacts protein L29, and trigger factor when it is bound to the ribosome.

Its function is as follows. One of the early assembly proteins it binds 23S rRNA. One of the proteins that surrounds the polypeptide exit tunnel on the outside of the ribosome. Forms the main docking site for trigger factor binding to the ribosome. This chain is Large ribosomal subunit protein uL23, found in Methylobacterium nodulans (strain LMG 21967 / CNCM I-2342 / ORS 2060).